The sequence spans 251 residues: Methionine aminopeptidase (251 aa).

Residue His-79 coordinates substrate. A divalent metal cation is bound by residues Asp-96, Asp-107, and His-170. His-177 lines the substrate pocket. 2 residues coordinate a divalent metal cation: Glu-204 and Glu-235.

The protein belongs to the peptidase M24A family. Methionine aminopeptidase type 1 subfamily. In terms of assembly, monomer. Co(2+) is required as a cofactor. The cofactor is Zn(2+). Requires Mn(2+) as cofactor. It depends on Fe(2+) as a cofactor.

It carries out the reaction Release of N-terminal amino acids, preferentially methionine, from peptides and arylamides.. Its function is as follows. Removes the N-terminal methionine from nascent proteins. The N-terminal methionine is often cleaved when the second residue in the primary sequence is small and uncharged (Met-Ala-, Cys, Gly, Pro, Ser, Thr, or Val). Requires deformylation of the N(alpha)-formylated initiator methionine before it can be hydrolyzed. The polypeptide is Methionine aminopeptidase (Borreliella burgdorferi (strain ATCC 35210 / DSM 4680 / CIP 102532 / B31) (Borrelia burgdorferi)).